The following is a 145-amino-acid chain: D-aminoacyl-tRNA deacylase (145 aa).

Positions glycine 137 to proline 138 match the Gly-cisPro motif, important for rejection of L-amino acids motif.

The protein belongs to the DTD family. As to quaternary structure, homodimer.

The protein localises to the cytoplasm. The enzyme catalyses glycyl-tRNA(Ala) + H2O = tRNA(Ala) + glycine + H(+). It catalyses the reaction a D-aminoacyl-tRNA + H2O = a tRNA + a D-alpha-amino acid + H(+). Functionally, an aminoacyl-tRNA editing enzyme that deacylates mischarged D-aminoacyl-tRNAs. Also deacylates mischarged glycyl-tRNA(Ala), protecting cells against glycine mischarging by AlaRS. Acts via tRNA-based rather than protein-based catalysis; rejects L-amino acids rather than detecting D-amino acids in the active site. By recycling D-aminoacyl-tRNA to D-amino acids and free tRNA molecules, this enzyme counteracts the toxicity associated with the formation of D-aminoacyl-tRNA entities in vivo and helps enforce protein L-homochirality. The polypeptide is D-aminoacyl-tRNA deacylase (Idiomarina loihiensis (strain ATCC BAA-735 / DSM 15497 / L2-TR)).